The sequence spans 294 residues: Cytidine deaminase (294 aa).

2 CMP/dCMP-type deaminase domains span residues 48-168 (DEDA…FGPK) and 186-294 (LTGD…VLLA). 89–91 (NME) contributes to the substrate binding site. H102 is a Zn(2+) binding site. E104 serves as the catalytic Proton donor. Zn(2+) is bound by residues C129 and C132.

This sequence belongs to the cytidine and deoxycytidylate deaminase family. Homodimer. The cofactor is Zn(2+).

The catalysed reaction is cytidine + H2O + H(+) = uridine + NH4(+). It catalyses the reaction 2'-deoxycytidine + H2O + H(+) = 2'-deoxyuridine + NH4(+). In terms of biological role, this enzyme scavenges exogenous and endogenous cytidine and 2'-deoxycytidine for UMP synthesis. This is Cytidine deaminase from Escherichia coli O7:K1 (strain IAI39 / ExPEC).